The following is an 88-amino-acid chain: Toxin RelE3 (88 aa).

Belongs to the RelE toxin family. In terms of assembly, forms heterodimers with RelB3 and possibly a heterotetramer RelE3-RelB3(2)-RelE3 from 2 heterodimers. The heterotetramer is probably not very stable in solution.

Functionally, toxic component of a type II toxin-antitoxin (TA) system. Has RNase activity. Is very toxic upon expression in E.coli. Its toxic activity is probably neutralized by the cognate antitoxin RelB3. The sequence is that of Toxin RelE3 (relE3) from Methanocaldococcus jannaschii (strain ATCC 43067 / DSM 2661 / JAL-1 / JCM 10045 / NBRC 100440) (Methanococcus jannaschii).